The chain runs to 316 residues: Protein U25 (316 aa).

Belongs to the herpesviridae US22 family.

The sequence is that of Protein U25 (U25) from Human herpesvirus 6B (HHV-6 variant B).